Here is a 173-residue protein sequence, read N- to C-terminus: RNA pyrophosphohydrolase (173 aa).

A Nudix hydrolase domain is found at 6–149 (GFRANVGIII…KRDVYRKVMK (144 aa)). Positions 38–59 (GGVDDGETPEEAMYRELYEEVG) match the Nudix box motif.

It belongs to the Nudix hydrolase family. RppH subfamily. It depends on a divalent metal cation as a cofactor.

Accelerates the degradation of transcripts by removing pyrophosphate from the 5'-end of triphosphorylated RNA, leading to a more labile monophosphorylated state that can stimulate subsequent ribonuclease cleavage. The protein is RNA pyrophosphohydrolase of Shewanella woodyi (strain ATCC 51908 / MS32).